Here is a 657-residue protein sequence, read N- to C-terminus: Putative serine protease (657 aa).

3 helical membrane passes run 4 to 24 (YLATSVRLCLMVCIVGWLLMP), 46 to 62 (WLLTGLSTWFCIVPSGT), and 109 to 131 (LLSGVTFSVVLWYPRILVTVLML). The Peptidase S39 domain maps to 239–434 (QPGSDFVECE…ETDRYARTME (196 aa)). Residues His-284, Asp-318, and Ser-386 each act as for protease activity in the active site. A disordered region spans residues 513-605 (PLGGLPISNG…PPSTGSVPKS (93 aa)). The span at 548 to 559 (HTRRRRRNKKKS) shows a compositional bias: basic residues. A compositionally biased stretch (basic and acidic residues) spans 560–569 (KNSETGHGPE). A compositionally biased stretch (low complexity) spans 571–589 (QSQQQSRPSSPIPDDSAPV).

This sequence belongs to the peptidase S39B family.

The protein resides in the host membrane. Functionally, putative serine protease. The sequence is that of Putative serine protease from Mushroom bacilliform virus (isolate Australia/AUS LF-1) (MBV).